A 362-amino-acid chain; its full sequence is Phosphate acyltransferase (362 aa).

A disordered region spans residues 343–362 (TKKISTSTINPKTSETTKES). Polar residues predominate over residues 344-356 (KKISTSTINPKTS).

Belongs to the PlsX family. In terms of assembly, homodimer. Probably interacts with PlsY.

It is found in the cytoplasm. The catalysed reaction is a fatty acyl-[ACP] + phosphate = an acyl phosphate + holo-[ACP]. The protein operates within lipid metabolism; phospholipid metabolism. Functionally, catalyzes the reversible formation of acyl-phosphate (acyl-PO(4)) from acyl-[acyl-carrier-protein] (acyl-ACP). This enzyme utilizes acyl-ACP as fatty acyl donor, but not acyl-CoA. This is Phosphate acyltransferase from Aster yellows witches'-broom phytoplasma (strain AYWB).